The sequence spans 449 residues: Adenylyltransferase and sulfurtransferase MOCS3 (449 aa).

Residues Gly-96, Asp-117, 124–128 (SNLHR), Lys-141, and 185–186 (DN) contribute to the ATP site. Cys-227 and Cys-230 together coordinate Zn(2+). The Glycyl thioester intermediate; for adenylyltransferase activity role is filled by Cys-244. Zn(2+) contacts are provided by Cys-302 and Cys-305. In terms of domain architecture, Rhodanese spans 351–447 (QDKPHLLLDV…WTNQIDENFP (97 aa)). Cys-406 acts as the Cysteine persulfide intermediate; for sulfurtransferase activity in catalysis.

In the N-terminal section; belongs to the HesA/MoeB/ThiF family. UBA4 subfamily. Requires Zn(2+) as cofactor.

The protein localises to the cytoplasm. Its subcellular location is the cytosol. The enzyme catalyses [molybdopterin-synthase sulfur-carrier protein]-C-terminal Gly-Gly + ATP + H(+) = [molybdopterin-synthase sulfur-carrier protein]-C-terminal Gly-Gly-AMP + diphosphate. The catalysed reaction is [molybdopterin-synthase sulfur-carrier protein]-C-terminal Gly-Gly-AMP + S-sulfanyl-L-cysteinyl-[cysteine desulfurase] + AH2 = [molybdopterin-synthase sulfur-carrier protein]-C-terminal-Gly-aminoethanethioate + L-cysteinyl-[cysteine desulfurase] + A + AMP + 2 H(+). The protein operates within tRNA modification; 5-methoxycarbonylmethyl-2-thiouridine-tRNA biosynthesis. It functions in the pathway cofactor biosynthesis; molybdopterin biosynthesis. In terms of biological role, plays a central role in 2-thiolation of mcm(5)S(2)U at tRNA wobble positions of cytosolic tRNA(Lys), tRNA(Glu) and tRNA(Gln). Also essential during biosynthesis of the molybdenum cofactor. Acts by mediating the C-terminal thiocarboxylation of sulfur carriers URM1 and MOCS2A. Its N-terminus first activates URM1 and MOCS2A as acyl-adenylates (-COAMP), then the persulfide sulfur on the catalytic cysteine is transferred to URM1 and MOCS2A to form thiocarboxylation (-COSH) of their C-terminus. The reaction probably involves hydrogen sulfide that is generated from the persulfide intermediate and that acts as a nucleophile towards URM1 and MOCS2A. Subsequently, a transient disulfide bond is formed. Does not use thiosulfate as sulfur donor; NFS1 probably acting as a sulfur donor for thiocarboxylation reactions. The polypeptide is Adenylyltransferase and sulfurtransferase MOCS3 (Drosophila grimshawi (Hawaiian fruit fly)).